The sequence spans 180 residues: Large ribosomal subunit protein uL5 (180 aa).

This sequence belongs to the universal ribosomal protein uL5 family. As to quaternary structure, part of the 50S ribosomal subunit; part of the 5S rRNA/L5/L18/L25 subcomplex. Contacts the 5S rRNA and the P site tRNA. Forms a bridge to the 30S subunit in the 70S ribosome.

In terms of biological role, this is one of the proteins that bind and probably mediate the attachment of the 5S RNA into the large ribosomal subunit, where it forms part of the central protuberance. In the 70S ribosome it contacts protein S13 of the 30S subunit (bridge B1b), connecting the 2 subunits; this bridge is implicated in subunit movement. Contacts the P site tRNA; the 5S rRNA and some of its associated proteins might help stabilize positioning of ribosome-bound tRNAs. This is Large ribosomal subunit protein uL5 from Xanthomonas euvesicatoria pv. vesicatoria (strain 85-10) (Xanthomonas campestris pv. vesicatoria).